A 389-amino-acid polypeptide reads, in one-letter code: Nuclear receptor subfamily 2 group F member 1-B (389 aa).

A disordered region spans residues 19-39; sequence DDQSAAGREHLQHRHSPKSAE. The nuclear receptor DNA-binding region spans 51–126; that stretch reads HVECVVCGDK…VGMRREAVQR (76 aa). 2 consecutive NR C4-type zinc fingers follow at residues 54–74 and 90–109; these read CVVC…CEGC and CRAN…CQYC. Residues 152 to 378 enclose the NR LBD domain; that stretch reads YLSGYISLLL…TLIRDMLLSG (227 aa).

It belongs to the nuclear hormone receptor family. NR2 subfamily. In terms of tissue distribution, expressed the retina, where expression is restricted to the outer nuclear layer.

The protein localises to the nucleus. Putative transcription factor that is required in photoreceptor cells precursors during eye development. In Danio rerio (Zebrafish), this protein is Nuclear receptor subfamily 2 group F member 1-B.